We begin with the raw amino-acid sequence, 873 residues long: uncharacterized protein (873 aa).

Disordered stretches follow at residues 1 to 24, 175 to 251, 375 to 423, 506 to 540, 568 to 592, 662 to 773, and 822 to 855; these read MSNKPDANDQCMVKETISRMSMSK, SSAV…TSIS, PSRH…AKKP, DSESASYNTDDANSVVSPSKDGISTTTVSSDATRS, DQSSRYPGRHFGKTGRSHFPRAPEY, ANDS…TSQI, and ANPYSTNNDGNPSNNTSDVEVNETSMNDNSEEPI. The segment covering 211–225 has biased composition (basic and acidic residues); it reads KDSDRSQTKNTHEET. A compositionally biased stretch (basic residues) spans 376 to 385; the sequence is SRHHSHRKKE. Over residues 574–586 the composition is skewed to basic residues; the sequence is PGRHFGKTGRSHF. Low complexity predominate over residues 665-686; that stretch reads SPNSSESLESLNNQSYSSSPYS. Polar residues predominate over residues 698-740; it reads QSLNDSPQTSDFKASNLNDSSSNVHSIFQTRETTSPSVQNKTP. Positions 743-755 are enriched in basic and acidic residues; it reads YHRELKSSKDGHE. Low complexity predominate over residues 758 to 773; sequence SPLVSSSPSGSFTSQI. Polar residues predominate over residues 823–855; it reads NPYSTNNDGNPSNNTSDVEVNETSMNDNSEEPI.

It is found in the cytoplasm. The protein resides in the vacuole membrane. This is an uncharacterized protein from Schizosaccharomyces pombe (strain 972 / ATCC 24843) (Fission yeast).